Here is a 426-residue protein sequence, read N- to C-terminus: Neuromedin-U receptor 1 (426 aa).

Topologically, residues 1 to 65 (MTPLCLNCSV…QTELFMPICA (65 aa)) are extracellular. Residues Asn-7, Asn-27, and Asn-41 are each glycosylated (N-linked (GlcNAc...) asparagine). A helical transmembrane segment spans residues 66–86 (TYLLIFVVGAVGNGLTCLVIL). The Cytoplasmic segment spans residues 87 to 97 (RHKAMRTPTNY). The helical transmembrane segment at 98–118 (YLFSLAVSDLLVLLVGLPLEL) threads the bilayer. Residues 119–138 (YEMWHNYPFLLGVGGCYFRT) are Extracellular-facing. A disulfide bridge links Cys-134 with Cys-219. A helical transmembrane segment spans residues 139–161 (LLFEMVCLASVLNVTALSVERYV). Residues 162–181 (AVVHPLQARSMVTRAHVRRV) are Cytoplasmic-facing. The chain crosses the membrane as a helical span at residues 182–202 (LGAVWGLAMLCSLPNTSLHGI). Topologically, residues 203 to 235 (RQLHVPCRGPVPDSAVCMLVRPRALYNMVVQTT) are extracellular. Residues 236-256 (ALLFFCLPMAIMSVLYLLIGL) form a helical membrane-spanning segment. The Cytoplasmic segment spans residues 257-294 (RLRRERLLLMQEAKGRGSAAARSRYTCRLQQHDRGRRQ). A helical membrane pass occupies residues 295 to 315 (VTKMLFVLVVVFGICWAPFHA). Residues 316 to 338 (DRVMWSVVSQWTDGLHLAFQHVH) lie on the Extracellular side of the membrane. A helical membrane pass occupies residues 339 to 359 (VISGIFFYLGSAANPVLYSLM). The Cytoplasmic segment spans residues 360–426 (SSRFRETFQE…PEAQQETDPS (67 aa)).

This sequence belongs to the G-protein coupled receptor 1 family. As to expression, expressed in greatest abundance in peripheral organs, particularly in elements of the gastrointestinal and urogenital systems with highest levels in testes. In central nervous system structures express levels are much lower than those seen in peripheral organs. Within the CNS, has been detected in highest abundance in the cerebellum, dorsal root ganglia, hippocampus, and spinal cord.

It localises to the cell membrane. In terms of biological role, receptor for the neuromedin-U and neuromedin-S neuropeptides. The chain is Neuromedin-U receptor 1 (NMUR1) from Homo sapiens (Human).